The following is a 149-amino-acid chain: Transcriptional repressor NrdR (149 aa).

Residues 3–34 (CPFCSATDTKVIDSRLVADGHQVRRRRECAEC) fold into a zinc finger. The ATP-cone domain occupies 49-139 (PRVVKQDGSR…VYRAFEDVSE (91 aa)).

The protein belongs to the NrdR family. The cofactor is Zn(2+).

Functionally, negatively regulates transcription of bacterial ribonucleotide reductase nrd genes and operons by binding to NrdR-boxes. The polypeptide is Transcriptional repressor NrdR (Shewanella sediminis (strain HAW-EB3)).